Here is an 819-residue protein sequence, read N- to C-terminus: MDTEGFGELLQQAEQLAAETEGISELPHVERNLQEIQQAGERLRSRTLTRTSQETADVKASVLLGSRGLDISHISQRLESLSAATTFEPLEPVKDTDIQGFLKNEKDNALLSAIEESRKRTFGMAEEYHRESMLVEWEQVKQRILHTLLASGEDALDFTQESEPSYISDAGPPGRSSLDSIEMAYARQIYIYNEKIVNGHLQPNLLDLCASVTELDDKNISDMWAMVKQMTDVLLVPATDALKSRNSVEVRMEFVRQALGYLEQSYKNYTLVTVFGNLHQAQLGGVPGTYQLVRSFLNIKLPAPLPGLQDGEVEGHPVWALIYYCMRCGDLLAASQVVNRAQHQLGEFKTWFQEYMNSKDRRLSPATENKLRLHYRRALRNNTDPYKRAVYCIIGRCDVTDNQSEVADKTEDYLWLKLNQVCFDDDGTSSPQDRLTLSQFQKQLLEDYGESHFTVNQQPFLYFQVLFLTAQFEAAIAFLFRMERLRCHAVHVALVLFELKLLLKSSGQSAQLLSHEPGDPPCMRRLNFVRLLMLYTRKFESTDPREALQYFYFLRDEKDSQGENMFLRCVSELVIESREFDMILGKLENDGSRKPGVIDKFTSDTKPIINKVASVAENKGLFEEAAKLYDLAKNADKVLELMNKLLSPIVPQISAPQSNKERLKNMALSIAERYRAQGISANKFVDSTFYLLLDLITFFDEYHSGHIDRAFDIIDRLKLVPLNQESVEERVAAFRNFSDEIRHNLSEVLLATMNILFTQFKRLKGTSPSSATRPQRVIEDRDSQLRSQARALITFAGMIPYRTSGDTNARLVQMEVLMN.

T49 is subject to Phosphothreonine. A phosphoserine mark is found at S52, S66, S72, S75, S80, S430, and S767.

Belongs to the nucleoporin interacting component (NIC) family. As to quaternary structure, part of the nuclear pore complex (NPC). Component of the p62 complex, a complex composed of NUP62 and NUP54. Forms a complex with NUP35, NUP155, NUP205 and lamin B; the interaction with NUP35 is direct. Does not interact with TPR. Interacts with SMAD4 and IPO7; translocates SMAD4 to the nucleus through the NPC upon BMP7 stimulation resulting in activation of SMAD4 signaling.

The protein localises to the nucleus membrane. It is found in the nucleus. The protein resides in the nuclear pore complex. It localises to the nucleus envelope. Plays a role in the nuclear pore complex (NPC) assembly and/or maintenance. May anchor nucleoporins, but not NUP153 and TPR, to the NPC. During renal development, regulates podocyte migration and proliferation through SMAD4 signaling. This Bos taurus (Bovine) protein is Nuclear pore complex protein Nup93 (NUP93).